A 283-amino-acid chain; its full sequence is Bifunctional protein FolD (283 aa).

Residues 165 to 167 (GRS), Ser-190, and Val-231 contribute to the NADP(+) site.

It belongs to the tetrahydrofolate dehydrogenase/cyclohydrolase family. In terms of assembly, homodimer. Interacts with BrxC.

It catalyses the reaction (6R)-5,10-methylene-5,6,7,8-tetrahydrofolate + NADP(+) = (6R)-5,10-methenyltetrahydrofolate + NADPH. The enzyme catalyses (6R)-5,10-methenyltetrahydrofolate + H2O = (6R)-10-formyltetrahydrofolate + H(+). The protein operates within one-carbon metabolism; tetrahydrofolate interconversion. Catalyzes the oxidation of 5,10-methylenetetrahydrofolate to 5,10-methenyltetrahydrofolate and then the hydrolysis of 5,10-methenyltetrahydrofolate to 10-formyltetrahydrofolate. In Bacillus subtilis (strain 168), this protein is Bifunctional protein FolD.